Consider the following 700-residue polypeptide: Elongation factor G (700 aa).

A tr-type G domain is found at Glu-8–Thr-290. Residues Ala-17–Thr-24, Asp-88–His-92, and Asn-142–Asp-145 contribute to the GTP site.

The protein belongs to the TRAFAC class translation factor GTPase superfamily. Classic translation factor GTPase family. EF-G/EF-2 subfamily.

The protein localises to the cytoplasm. Catalyzes the GTP-dependent ribosomal translocation step during translation elongation. During this step, the ribosome changes from the pre-translocational (PRE) to the post-translocational (POST) state as the newly formed A-site-bound peptidyl-tRNA and P-site-bound deacylated tRNA move to the P and E sites, respectively. Catalyzes the coordinated movement of the two tRNA molecules, the mRNA and conformational changes in the ribosome. The sequence is that of Elongation factor G from Haemophilus influenzae (strain PittEE).